The chain runs to 387 residues: MSVIKMTDLELAGKRVFIRADLNVPVKDGKVTSDARILASLPTIKLCLEAGAKVMVTSHLGRPTEGEYNEEFSLAPVVNYLNDALDCDVKLAKDYLDGLELNAGELVVLENVRFNKGEKKNEEELSKKYAALCDIFVMDAFGTAHRAQASTHGVGMNAPVACAGPLLAAELEALGKAMSNPERPLVAIVGGSKVSTKLTVLESLSKIADQLVVGGGIANTFIAAEGHNVGKSLYEADLVETAQKLMKECAIPVATDVACAKAFDENAEAEIKHVSEVQDDDMIFDLGPDSTAALAEIIGNAKTILWNGPVGVFEFKNFEAGTAGISKAIAESAGFSVAGGGDTLAAIDKFGIKADVSYISTGGGAFLEFVEGKVLPAVAMLEERAKA.

Substrate contacts are provided by residues 21 to 23 (DLN), arginine 36, 59 to 62 (HLGR), arginine 113, and arginine 146. Residues lysine 197, glutamate 314, and 340 to 343 (GGDT) contribute to the ATP site.

It belongs to the phosphoglycerate kinase family. As to quaternary structure, monomer.

The protein localises to the cytoplasm. It carries out the reaction (2R)-3-phosphoglycerate + ATP = (2R)-3-phospho-glyceroyl phosphate + ADP. It functions in the pathway carbohydrate degradation; glycolysis; pyruvate from D-glyceraldehyde 3-phosphate: step 2/5. The sequence is that of Phosphoglycerate kinase from Aliivibrio fischeri (strain ATCC 700601 / ES114) (Vibrio fischeri).